We begin with the raw amino-acid sequence, 224 residues long: Response regulator protein GraR (224 aa).

A Response regulatory domain is found at 2–115; sequence QILLVEDDNT…VLIAKLQAIY (114 aa). At Asp51 the chain carries 4-aspartylphosphate. The ompR/PhoB-type DNA-binding region spans 126 to 224; the sequence is KRTLTWQDAI…KVGKGYMAHE (99 aa). Residues Thr128, Thr130, and Thr149 each carry the phosphothreonine modification.

Interacts with GraX. Phosphorylated by GraS. Phosphorylated by Stk1; phosphorylation increases the DNA-binding activity of GraR.

The protein resides in the cytoplasm. In terms of biological role, member of the two-component regulatory system GraR/GraS involved in resistance against cationic antimicrobial peptides (CAMPs). Upon phosphorylation by GraS, functions as a transcription regulator by direct binding to promoter regions of target genes such as adhesins, exoproteins, transporters, toxins, and proteins involved in cell wall synthesis. Down-regulates the expression of many genes involved in RNA and amino acid synthesis or glycolysis. The chain is Response regulator protein GraR (graR) from Staphylococcus aureus (strain bovine RF122 / ET3-1).